We begin with the raw amino-acid sequence, 339 residues long: Phenylalanine--tRNA ligase alpha subunit (339 aa).

Mg(2+) is bound at residue Glu-254.

Belongs to the class-II aminoacyl-tRNA synthetase family. Phe-tRNA synthetase alpha subunit type 1 subfamily. As to quaternary structure, tetramer of two alpha and two beta subunits. It depends on Mg(2+) as a cofactor.

Its subcellular location is the cytoplasm. It catalyses the reaction tRNA(Phe) + L-phenylalanine + ATP = L-phenylalanyl-tRNA(Phe) + AMP + diphosphate + H(+). The polypeptide is Phenylalanine--tRNA ligase alpha subunit (Clostridium perfringens (strain SM101 / Type A)).